The primary structure comprises 178 residues: Peptide deformylase (178 aa).

Positions 102 and 144 each coordinate Fe cation. Residue glutamate 145 is part of the active site. Histidine 148 contributes to the Fe cation binding site.

This sequence belongs to the polypeptide deformylase family. Fe(2+) is required as a cofactor.

It catalyses the reaction N-terminal N-formyl-L-methionyl-[peptide] + H2O = N-terminal L-methionyl-[peptide] + formate. In terms of biological role, removes the formyl group from the N-terminal Met of newly synthesized proteins. Requires at least a dipeptide for an efficient rate of reaction. N-terminal L-methionine is a prerequisite for activity but the enzyme has broad specificity at other positions. In Leptospira borgpetersenii serovar Hardjo-bovis (strain JB197), this protein is Peptide deformylase.